A 428-amino-acid chain; its full sequence is Enolase (428 aa).

(2R)-2-phosphoglycerate is bound at residue Gln163. The active-site Proton donor is the Glu205. Residues Asp242, Glu285, and Asp312 each coordinate Mg(2+). (2R)-2-phosphoglycerate-binding residues include Lys337, Arg366, Ser367, and Lys388. The active-site Proton acceptor is Lys337.

This sequence belongs to the enolase family. In terms of assembly, component of the RNA degradosome, a multiprotein complex involved in RNA processing and mRNA degradation. It depends on Mg(2+) as a cofactor.

It is found in the cytoplasm. It localises to the secreted. The protein localises to the cell surface. The catalysed reaction is (2R)-2-phosphoglycerate = phosphoenolpyruvate + H2O. Its pathway is carbohydrate degradation; glycolysis; pyruvate from D-glyceraldehyde 3-phosphate: step 4/5. Functionally, catalyzes the reversible conversion of 2-phosphoglycerate (2-PG) into phosphoenolpyruvate (PEP). It is essential for the degradation of carbohydrates via glycolysis. The sequence is that of Enolase from Halorhodospira halophila (strain DSM 244 / SL1) (Ectothiorhodospira halophila (strain DSM 244 / SL1)).